A 230-amino-acid chain; its full sequence is Cytidylate kinase (230 aa).

Residue 12–20 coordinates ATP; the sequence is GPSGAGKGT.

It belongs to the cytidylate kinase family. Type 1 subfamily.

The protein resides in the cytoplasm. It catalyses the reaction CMP + ATP = CDP + ADP. The catalysed reaction is dCMP + ATP = dCDP + ADP. The sequence is that of Cytidylate kinase from Shewanella loihica (strain ATCC BAA-1088 / PV-4).